Here is a 308-residue protein sequence, read N- to C-terminus: Ribosomal protein uL3 glutamine methyltransferase (308 aa).

This sequence belongs to the protein N5-glutamine methyltransferase family. PrmB subfamily.

It carries out the reaction L-glutaminyl-[ribosomal protein uL3] + S-adenosyl-L-methionine = N(5)-methyl-L-glutaminyl-[ribosomal protein uL3] + S-adenosyl-L-homocysteine + H(+). Its function is as follows. Methylates large ribosomal subunit protein uL3 on a specific glutamine residue. In Xanthomonas campestris pv. campestris (strain ATCC 33913 / DSM 3586 / NCPPB 528 / LMG 568 / P 25), this protein is Ribosomal protein uL3 glutamine methyltransferase.